The chain runs to 3114 residues: Centromere protein F (3114 aa).

Residues 1–481 (MSWALEEWKE…IKENELRRSM (481 aa)) are interaction with SNAP25 and required for localization to the cytoplasm. The stretch at 13–131 (PTRALQKIQE…KSELERSQQA (119 aa)) forms a coiled coil. Position 106 is a phosphoserine (serine 106). 3 positions are modified to phosphothreonine: threonine 144, threonine 151, and threonine 154. Phosphotyrosine is present on tyrosine 158. Polar residues predominate over residues 211 to 235 (QASSSVFSWQQEKTPSHLSSNSQRT). Residues 211 to 236 (QASSSVFSWQQEKTPSHLSSNSQRTP) form a disordered region. A phosphoserine mark is found at serine 242 and serine 276. Positions 280–685 (LDQLKAQNQE…SVEIRNLHNV (406 aa)) form a coiled coil. Phosphoserine is present on residues serine 773, serine 783, serine 821, serine 834, serine 838, and serine 876. Coiled coils occupy residues 899 to 989 (VAET…LNQE) and 1196 to 1244 (LEVK…IRGD). Phosphoserine is present on residues serine 1248, serine 1255, and serine 1259. Positions 1549–1646 (VEELESLCEV…ELEVARLQLQ (98 aa)) form a coiled coil. Serine 1651, serine 1652, and serine 1654 each carry phosphoserine. Disordered stretches follow at residues 1667–1690 (RNES…KHDV) and 1710–1746 (TETG…SECI). Positions 1669–1690 (ESCDISKEHTSETTERTPKHDV) are enriched in basic and acidic residues. A Phosphoserine modification is found at serine 1726. Threonine 1862 carries the post-translational modification Phosphothreonine. Serine 1868 and serine 1892 each carry phosphoserine. Coiled coils occupy residues 1890–2078 (NDSW…LQAR) and 2107–2891 (LSST…LCSQ). Residues 2026–2351 (LLKDKTHLQE…ERELEIARTN (326 aa)) form an interaction with NDE1 and NDEL1 region. 2 repeat units span residues 2111–2290 (QEEV…QSLD) and 2293–2472 (IEEE…QNLS). Positions 2111 to 2472 (QEEVHQLRRG…ACKAKEQNLS (362 aa)) are 2 X 177 AA tandem repeats. Positions 2392–2829 (SEKENLTNEL…QAAQEKQKTG (438 aa)) are sufficient for self-association. A sufficient for centromere localization region spans residues 2392 to 3017 (SEKENLTNEL…ATRTSPRLAA (626 aa)). Phosphoserine occurs at positions 2416 and 2417. Lysine 2779 is subject to N6-acetyllysine. The tract at residues 2831 to 3017 (VMDTKVDELT…ATRTSPRLAA (187 aa)) is sufficient for nuclear localization. Residues 2891–2977 (QQSKQDSRGS…AEDTEGTEFE (87 aa)) form a disordered region. Residues serine 2900, serine 2911, serine 2922, and serine 2936 each carry the phosphoserine modification. Residues 2919–2936 (KRLSSGQNKASGKRQRSS) carry the Nuclear localization signal motif. The residue at position 2949 (threonine 2949) is a Phosphothreonine. Phosphoserine is present on residues serine 2952, serine 2998, serine 3023, and serine 3026. The tract at residues 3024 to 3114 (PLSLGKENLA…SNGSENCKVQ (91 aa)) is disordered. The span at 3033–3045 (AESSKPTAGGSRS) shows a compositional bias: polar residues. A phosphoserine mark is found at serine 3054, serine 3079, and serine 3083. Residues 3079-3089 (SPTDSPREGLR) are compositionally biased toward basic and acidic residues. Residues 3105–3114 (SNGSENCKVQ) are compositionally biased toward polar residues. Cysteine 3111 carries the post-translational modification Cysteine methyl ester. Cysteine 3111 carries the S-farnesyl cysteine lipid modification. A propeptide spans 3112–3114 (KVQ) (removed in mature form).

It belongs to the centromere protein F family. As to quaternary structure, interacts with and STX4 (via C-terminus). Interacts (via N-terminus) with RBL1, RBL2 and SNAP25. Self-associates. Interacts with CENP-E and BUBR1 (via C-terminus). Interacts (via C-terminus) with NDE1, NDEL1 and RB1. In terms of processing, hyperphosphorylated during mitosis.

Its subcellular location is the cytoplasm. It is found in the perinuclear region. It localises to the nucleus matrix. The protein localises to the chromosome. The protein resides in the centromere. Its subcellular location is the kinetochore. It is found in the cytoskeleton. It localises to the spindle. Required for kinetochore function and chromosome segregation in mitosis. Required for kinetochore localization of dynein, LIS1, NDE1 and NDEL1. Regulates recycling of the plasma membrane by acting as a link between recycling vesicles and the microtubule network though its association with STX4 and SNAP25. Acts as a potential inhibitor of pocket protein-mediated cellular processes during development by regulating the activity of RB proteins during cell division and proliferation. May play a regulatory or permissive role in the normal embryonic cardiomyocyte cell cycle and in promoting continued mitosis in transformed, abnormally dividing neonatal cardiomyocytes. Interaction with RB directs embryonic stem cells toward a cardiac lineage. Involved in the regulation of DNA synthesis and hence cell cycle progression, via its C-terminus. Has a potential role regulating skeletal myogenesis and in cell differentiation in embryogenesis. Involved in dendritic cell regulation of T-cell immunity against chlamydia. The polypeptide is Centromere protein F (CENPF) (Homo sapiens (Human)).